The chain runs to 173 residues: Putative metal-dependent hydrolase BA_2700/GBAA_2700/BAS2515 (173 aa).

Residues His-65, His-156, and His-160 each contribute to the Zn(2+) site.

It belongs to the metal hydrolase YfiT family. As to quaternary structure, homodimer. The cofactor is Zn(2+).

It localises to the cytoplasm. In terms of biological role, possible metal-dependent hydrolase. The polypeptide is Putative metal-dependent hydrolase BA_2700/GBAA_2700/BAS2515 (Bacillus anthracis).